The primary structure comprises 141 residues: Hemoglobin subunit alpha-D (141 aa).

In terms of domain architecture, Globin spans M1–R141. The heme b site is built by H58 and H87.

Belongs to the globin family. As to quaternary structure, heterotetramer of two alpha-D chains and two beta chains. In terms of tissue distribution, red blood cells.

Functionally, involved in oxygen transport from the lung to the various peripheral tissues. In Phasianus colchicus colchicus (Black-necked pheasant), this protein is Hemoglobin subunit alpha-D (HBAD).